The sequence spans 205 residues: Penta-EF hand domain-containing protein 2 (205 aa).

3 consecutive EF-hand domains span residues 45–75, 76–111, and 119–141; these read EMQS…GGTP, LGIE…INNL, and DRNF…SGFQ. Residues Asp-54, Asn-56, Ser-58, Thr-60, Glu-65, Asp-89, Asn-91, Asn-93, Gln-95, and Glu-100 each coordinate Ca(2+).

The protein belongs to the Peflin/Sorcin family. In contrast to pefA, does not form homodimers in presence of Ca(2+). May form heterodimers with pefA.

It localises to the cytoplasm. The protein localises to the membrane. This chain is Penta-EF hand domain-containing protein 2 (pefB), found in Dictyostelium discoideum (Social amoeba).